Here is a 180-residue protein sequence, read N- to C-terminus: Orotate phosphoribosyltransferase (180 aa).

5-phospho-alpha-D-ribose 1-diphosphate contacts are provided by residues Arg95, Lys96, Lys99, and 121 to 129; that span reads EDVTTTGGS. The orotate site is built by Thr125 and Arg153.

The protein belongs to the purine/pyrimidine phosphoribosyltransferase family. PyrE subfamily. In terms of assembly, homodimer. Requires Mg(2+) as cofactor.

It catalyses the reaction orotidine 5'-phosphate + diphosphate = orotate + 5-phospho-alpha-D-ribose 1-diphosphate. It participates in pyrimidine metabolism; UMP biosynthesis via de novo pathway; UMP from orotate: step 1/2. Catalyzes the transfer of a ribosyl phosphate group from 5-phosphoribose 1-diphosphate to orotate, leading to the formation of orotidine monophosphate (OMP). In Methanothermobacter thermautotrophicus (strain ATCC 29096 / DSM 1053 / JCM 10044 / NBRC 100330 / Delta H) (Methanobacterium thermoautotrophicum), this protein is Orotate phosphoribosyltransferase.